The following is a 296-amino-acid chain: Probable endonuclease 4 (296 aa).

Residues histidine 68, histidine 109, glutamate 144, aspartate 178, histidine 181, histidine 213, aspartate 226, histidine 228, and glutamate 258 each coordinate Zn(2+).

It belongs to the AP endonuclease 2 family. Zn(2+) is required as a cofactor.

It carries out the reaction Endonucleolytic cleavage to 5'-phosphooligonucleotide end-products.. In terms of biological role, endonuclease IV plays a role in DNA repair. It cleaves phosphodiester bonds at apurinic or apyrimidinic (AP) sites, generating a 3'-hydroxyl group and a 5'-terminal sugar phosphate. This is Probable endonuclease 4 from Pediococcus pentosaceus (strain ATCC 25745 / CCUG 21536 / LMG 10740 / 183-1w).